The following is a 270-amino-acid chain: Formamidopyrimidine-DNA glycosylase (270 aa).

P2 acts as the Schiff-base intermediate with DNA in catalysis. The Proton donor role is filled by E3. K58 serves as the catalytic Proton donor; for beta-elimination activity. DNA-binding residues include H91, R110, and R151. An FPG-type zinc finger spans residues R236–R270. R260 (proton donor; for delta-elimination activity) is an active-site residue.

This sequence belongs to the FPG family. As to quaternary structure, monomer. Zn(2+) is required as a cofactor.

It carries out the reaction Hydrolysis of DNA containing ring-opened 7-methylguanine residues, releasing 2,6-diamino-4-hydroxy-5-(N-methyl)formamidopyrimidine.. The catalysed reaction is 2'-deoxyribonucleotide-(2'-deoxyribose 5'-phosphate)-2'-deoxyribonucleotide-DNA = a 3'-end 2'-deoxyribonucleotide-(2,3-dehydro-2,3-deoxyribose 5'-phosphate)-DNA + a 5'-end 5'-phospho-2'-deoxyribonucleoside-DNA + H(+). Its function is as follows. Involved in base excision repair of DNA damaged by oxidation or by mutagenic agents. Acts as a DNA glycosylase that recognizes and removes damaged bases. Has a preference for oxidized purines, such as 7,8-dihydro-8-oxoguanine (8-oxoG). Has AP (apurinic/apyrimidinic) lyase activity and introduces nicks in the DNA strand. Cleaves the DNA backbone by beta-delta elimination to generate a single-strand break at the site of the removed base with both 3'- and 5'-phosphates. This Thiobacillus denitrificans (strain ATCC 25259 / T1) protein is Formamidopyrimidine-DNA glycosylase.